A 421-amino-acid polypeptide reads, in one-letter code: UDP-N-acetylglucosamine 1-carboxyvinyltransferase (421 aa).

22–23 (KN) lines the phosphoenolpyruvate pocket. Residue Arg92 coordinates UDP-N-acetyl-alpha-D-glucosamine. Cys116 serves as the catalytic Proton donor. At Cys116 the chain carries 2-(S-cysteinyl)pyruvic acid O-phosphothioketal. Residues Asp307 and Val329 each coordinate UDP-N-acetyl-alpha-D-glucosamine.

It belongs to the EPSP synthase family. MurA subfamily.

It is found in the cytoplasm. It carries out the reaction phosphoenolpyruvate + UDP-N-acetyl-alpha-D-glucosamine = UDP-N-acetyl-3-O-(1-carboxyvinyl)-alpha-D-glucosamine + phosphate. It participates in cell wall biogenesis; peptidoglycan biosynthesis. Functionally, cell wall formation. Adds enolpyruvyl to UDP-N-acetylglucosamine. The polypeptide is UDP-N-acetylglucosamine 1-carboxyvinyltransferase (Kosmotoga olearia (strain ATCC BAA-1733 / DSM 21960 / TBF 19.5.1)).